The sequence spans 1171 residues: ATP-dependent helicase/deoxyribonuclease subunit B (1171 aa).

This sequence belongs to the helicase family. AddB/RexB type 2 subfamily. In terms of assembly, heterodimer of AddA and RexB. It depends on Mg(2+) as a cofactor.

Its function is as follows. The heterodimer acts as both an ATP-dependent DNA helicase and an ATP-dependent, dual-direction single-stranded exonuclease. Recognizes the chi site generating a DNA molecule suitable for the initiation of homologous recombination. This subunit has 5' -&gt; 3' nuclease activity but not helicase activity. In Leuconostoc citreum (strain KM20), this protein is ATP-dependent helicase/deoxyribonuclease subunit B.